A 423-amino-acid chain; its full sequence is Serine hydroxymethyltransferase (423 aa).

(6S)-5,6,7,8-tetrahydrofolate contacts are provided by residues L121 and 125 to 127 (GHL). K230 carries the N6-(pyridoxal phosphate)lysine modification. Position 355–357 (355–357 (SPF)) interacts with (6S)-5,6,7,8-tetrahydrofolate.

It belongs to the SHMT family. In terms of assembly, homodimer. Requires pyridoxal 5'-phosphate as cofactor.

It localises to the cytoplasm. The enzyme catalyses (6R)-5,10-methylene-5,6,7,8-tetrahydrofolate + glycine + H2O = (6S)-5,6,7,8-tetrahydrofolate + L-serine. The protein operates within one-carbon metabolism; tetrahydrofolate interconversion. Its pathway is amino-acid biosynthesis; glycine biosynthesis; glycine from L-serine: step 1/1. Catalyzes the reversible interconversion of serine and glycine with tetrahydrofolate (THF) serving as the one-carbon carrier. This reaction serves as the major source of one-carbon groups required for the biosynthesis of purines, thymidylate, methionine, and other important biomolecules. Also exhibits THF-independent aldolase activity toward beta-hydroxyamino acids, producing glycine and aldehydes, via a retro-aldol mechanism. This is Serine hydroxymethyltransferase from Hydrogenovibrio crunogenus (strain DSM 25203 / XCL-2) (Thiomicrospira crunogena).